Reading from the N-terminus, the 1902-residue chain is PII-type proteinase (1902 aa).

Positions 1–33 (MQRKKKGLSILLAGTVALGALAVLPVGEIQAKA) are cleaved as a signal peptide. Positions 34–187 (AISQQTKVSS…VTLAKVYYPT (154 aa)) are excised as a propeptide. Residues 191–697 (ANSMANVQAV…AGLVDVKAAI (507 aa)) form the Peptidase S8 domain. Residues aspartate 217, histidine 281, and serine 620 each act as charge relay system in the active site. Residues 1793-1805 (KTAGKGDDTTGTS) are compositionally biased toward low complexity. Positions 1793–1872 (KTAGKGDDTT…GKGALPKTAE (80 aa)) are disordered. The LPXTG sorting signal signature appears at 1867–1871 (LPKTA). The residue at position 1870 (threonine 1870) is a Pentaglycyl murein peptidoglycan amidated threonine. The propeptide at 1871–1902 (AETTERPAFGFLGVIVVSLMGVLGLKRKQREE) is removed by sortase.

Belongs to the peptidase S8 family.

It is found in the secreted. Its subcellular location is the cell wall. It catalyses the reaction Endopeptidase activity with very broad specificity, although some subsite preference have been noted, e.g. large hydrophobic residues in the P1 and P4 positions, and Pro in the P2 position. Best known for its action on caseins, although it has been shown to hydrolyze hemoglobin and oxidized insulin B-chain.. Functionally, protease which breaks down milk proteins during the growth of the bacteria on milk. The polypeptide is PII-type proteinase (prtP) (Lacticaseibacillus paracasei (Lactobacillus paracasei)).